A 33-amino-acid polypeptide reads, in one-letter code: Photosystem II reaction center protein Psb30 (33 aa).

The helical transmembrane segment at 5 to 25 threads the bilayer; it reads VVAQLTVLALIVVSGPLVIGL.

This sequence belongs to the Psb30/Ycf12 family. In terms of assembly, PSII is composed of 1 copy each of membrane proteins PsbA, PsbB, PsbC, PsbD, PsbE, PsbF, PsbH, PsbI, PsbJ, PsbK, PsbL, PsbM, PsbT, PsbX, PsbY, PsbZ, Psb30/Ycf12, peripheral proteins of the oxygen-evolving complex and a large number of cofactors. It forms dimeric complexes.

It is found in the plastid. It localises to the chloroplast thylakoid membrane. A core subunit of photosystem II (PSII), probably helps stabilize the reaction center. This chain is Photosystem II reaction center protein Psb30, found in Zygnema circumcarinatum (Green alga).